A 447-amino-acid polypeptide reads, in one-letter code: UDP-glycosyltransferase 76E3 (447 aa).

UDP-alpha-D-glucose contacts are provided by residues S269, 328-330, 345-353, and 367-370; these read APQ, HCGWNSTLE, and QGEQ.

It belongs to the UDP-glycosyltransferase family.

This Arabidopsis thaliana (Mouse-ear cress) protein is UDP-glycosyltransferase 76E3 (UGT76E3).